The following is a 177-amino-acid chain: UPF0102 protein BPP4042 (177 aa).

Residues 13 to 43 (AAQAQRRLHRRPPASPRASPGARDGGSPTQR) form a disordered region.

Belongs to the UPF0102 family.

The protein is UPF0102 protein BPP4042 of Bordetella parapertussis (strain 12822 / ATCC BAA-587 / NCTC 13253).